A 185-amino-acid polypeptide reads, in one-letter code: Ribosome-recycling factor (185 aa).

This sequence belongs to the RRF family.

It localises to the cytoplasm. In terms of biological role, responsible for the release of ribosomes from messenger RNA at the termination of protein biosynthesis. May increase the efficiency of translation by recycling ribosomes from one round of translation to another. The chain is Ribosome-recycling factor from Photobacterium profundum (strain SS9).